We begin with the raw amino-acid sequence, 852 residues long: MILSVFFYMFLLHIRRLDCFVAVQDSKTLFKGSTLINDSHGETLVSAGQRFELGFFTPNGSSDERRYLGIWFYNLHPLTVVWVANRESPVLDRSCIFTISKDGNLEVIDSKGRVYWDTGVKPSSVSAERMVKLMDNGNLVLISDGNEANVVWQSFQNPTDTFLPGMRMDENMTLSSWRSFNDPSHGNFTFQMDQEEDKQFIIWKRSMRYWKSGISGKFIGSDEMPYAISYFLSNFTETVTVHNASVPPLFTSLYTNTRFTMSSSGQAQYFRLDGERFWAQIWAEPRDECSVYNACGNFGSCNSKNEEMCKCLPGFRPNFLEKWVKGDFSGGCSRESRICGKDGVVVGDMFLNLSVVEVGSPDSQFDAHNEKECRAECLNNCQCQAYSYEEVDILQSNTKCWIWLEDLNNLKEGYLGSRNVFIRVAVPDIGSHVERGRGRYGEAKTPVVLIIVVTFTSAAILVVLSSTASYVFLQRRKVNKELGSIPRGVHLCDSERHIKELIESGRFKQDDSQGIDVPSFELETILYATSNFSNANKLGQGGFGPVYKGMFPGDQEIAVKRLSRCSGQGLEEFKNEVVLIAKLQHRNLVRLLGYCVAGEEKLLLYEYMPHKSLDFFIFDRKLCQRLDWKMRCNIILGIARGLLYLHQDSRLRIIHRDLKTSNILLDEEMNPKISDFGLARIFGGSETSANTNRVVGTYGYMSPEYALEGLFSFKSDVFSFGVVVIETISGKRNTGFHEPEKSLSLLGHAWDLWKAERGIELLDQALQESCETEGFLKCLNVGLLCVQEDPNDRPTMSNVVFMLGSSEAATLPTPKQPAFVLRRCPSSSKASSSTKPETCSENELTITLEDGR.

The N-terminal stretch at 1–19 (MILSVFFYMFLLHIRRLDC) is a signal peptide. The region spanning 20 to 154 (FVAVQDSKTL…GNEANVVWQS (135 aa)) is the Bulb-type lectin domain. Over 20–444 (FVAVQDSKTL…RGRGRYGEAK (425 aa)) the chain is Extracellular. 6 N-linked (GlcNAc...) asparagine glycosylation sites follow: Asn-37, Asn-59, Asn-171, Asn-187, Asn-234, and Asn-243. Residues 285–321 (PRDECSVYNACGNFGSCNSKNEEMCKCLPGFRPNFLE) form the EGF-like domain. 2 disulfides stabilise this stretch: Cys-289–Cys-301 and Cys-295–Cys-309. Positions 339-426 (CGKDGVVVGD…SRNVFIRVAV (88 aa)) constitute a PAN domain. An N-linked (GlcNAc...) asparagine glycan is attached at Asn-352. Cystine bridges form between Cys-373-Cys-400 and Cys-377-Cys-383. Residues 445–465 (TPVVLIIVVTFTSAAILVVLS) form a helical membrane-spanning segment. The Cytoplasmic segment spans residues 466-852 (STASYVFLQR…ELTITLEDGR (387 aa)). The Protein kinase domain occupies 532 to 819 (FSNANKLGQG…TLPTPKQPAF (288 aa)). Residues 538–546 (LGQGGFGPV) and Lys-560 each bind ATP. Ser-566 carries the phosphoserine modification. A caM-binding region spans residues 621-638 (KLCQRLDWKMRCNIILGI). Asp-657 serves as the catalytic Proton acceptor. Ser-661 and Ser-674 each carry phosphoserine. At Thr-691 the chain carries Phosphothreonine. Residues 826–852 (SSSKASSSTKPETCSENELTITLEDGR) form a disordered region. 2 positions are modified to phosphoserine: Ser-831 and Ser-840. The span at 834–845 (TKPETCSENELT) shows a compositional bias: polar residues. Position 847 is a phosphothreonine (Thr-847).

It belongs to the protein kinase superfamily. Ser/Thr protein kinase family.

It localises to the cell membrane. The enzyme catalyses L-seryl-[protein] + ATP = O-phospho-L-seryl-[protein] + ADP + H(+). It carries out the reaction L-threonyl-[protein] + ATP = O-phospho-L-threonyl-[protein] + ADP + H(+). The polypeptide is G-type lectin S-receptor-like serine/threonine-protein kinase At4g03230 (Arabidopsis thaliana (Mouse-ear cress)).